The sequence spans 627 residues: Muscarinic acetylcholine receptor gar-2 (627 aa).

The Extracellular segment spans residues 1 to 9 (MAVASVLLA). A helical transmembrane segment spans residues 10 to 30 (LFMLFLSIVTVIGNLAVLLSY). Topologically, residues 31–41 (YLDKNIRQPTN) are cytoplasmic. The chain crosses the membrane as a helical span at residues 42–62 (YFIFSLAISDLLIGLEGIPVY). Residues 63-81 (TAFYLNNNEWIWGDVLCDL) are Extracellular-facing. Cys-79 and Cys-160 form a disulfide bridge. The helical transmembrane segment at 82-102 (WLSIDYIVCLASIYTVLGITV) threads the bilayer. Residues 103 to 122 (DRYYSVKKPATYRNWRTPGR) lie on the Cytoplasmic side of the membrane. A helical transmembrane segment spans residues 123–143 (VVLIIIFIWLVPSILFSVSIF). Residues 144 to 172 (GYGTFTGTGRILKETECYVQFMTNPYLNM) lie on the Extracellular side of the membrane. A helical membrane pass occupies residues 173 to 193 (GMYISYYWTTLFVMLYLYWGI). Residues 194–549 (YRAAKKLALK…ENRARKALRT (356 aa)) are Cytoplasmic-facing. Disordered stretches follow at residues 222–266 (VSVR…VGTP), 423–442 (REDE…ENGG), and 449–475 (ANDE…HDPN). Residues 231 to 264 (NSSSDSPNDTSNSSKCFRTAPPTTTVQTTQTNVG) show a composition bias toward low complexity. Residues 459–475 (KESEQKEEMTPENHDPN) show a composition bias toward basic and acidic residues. Residues 550 to 570 (ITFILGSFIILWTPFYVLATI) traverse the membrane as a helical segment. The Extracellular portion of the chain corresponds to 571–586 (YGFCETCKASPSFNTL). A helical transmembrane segment spans residues 587–609 (YTISYYLCYMNSPLNPFCYAMAN). Topologically, residues 610–627 (QQFKKTLTRIFKGDFRRV) are cytoplasmic.

This sequence belongs to the G-protein coupled receptor 1 family. Muscarinic acetylcholine receptor subfamily. In terms of tissue distribution, expressed in putative sensory neurons, many cells of the ventral cord and in the HSN motor neurons. Expressed in some cholinergic motor neurons and GABAergic motor neurons, which are the two major types of ventral cord motor neurons.

It is found in the cell membrane. The protein resides in the cell projection. It localises to the axon. Functionally, the muscarinic acetylcholine receptor mediates various cellular responses, including inhibition of adenylate cyclase, breakdown of phosphoinositides and modulation of potassium channels through the action of G proteins. Primary transducing effect is Pi turnover. Regulates the activity of ventral cord motor neurons. Couples to the G(o)-alpha G-protein subunit goa-1 to negatively regulate cholinergic receptor activity in the presence of high levels of the neurotransmitter acetylcholine in ventral cord motor neurons. As acetylcholine depolarizes body wall muscles, modulation of acetylcholine levels most likely results in the control locomotory behavior and egg-laying. The protein is Muscarinic acetylcholine receptor gar-2 of Caenorhabditis elegans.